The sequence spans 270 residues: Glutamate racemase (270 aa).

Substrate contacts are provided by residues 7-8 (DS) and 39-40 (YG). Cys70 serves as the catalytic Proton donor/acceptor. 71-72 (NT) provides a ligand contact to substrate. The active-site Proton donor/acceptor is the Cys194. 195–196 (TH) is a binding site for substrate.

The protein belongs to the aspartate/glutamate racemases family.

It carries out the reaction L-glutamate = D-glutamate. It functions in the pathway cell wall biogenesis; peptidoglycan biosynthesis. Functionally, provides the (R)-glutamate required for cell wall biosynthesis. This chain is Glutamate racemase, found in Cereibacter sphaeroides (strain ATCC 17025 / ATH 2.4.3) (Rhodobacter sphaeroides).